The sequence spans 405 residues: Glucose-1-phosphate adenylyltransferase 1 (405 aa).

Alpha-D-glucose 1-phosphate contacts are provided by residues Tyr96, Gly161, 176 to 177 (EK), and Ser194.

This sequence belongs to the bacterial/plant glucose-1-phosphate adenylyltransferase family. As to quaternary structure, homotetramer.

The enzyme catalyses alpha-D-glucose 1-phosphate + ATP + H(+) = ADP-alpha-D-glucose + diphosphate. The protein operates within glycan biosynthesis; glycogen biosynthesis. Functionally, involved in the biosynthesis of ADP-glucose, a building block required for the elongation reactions to produce glycogen. Catalyzes the reaction between ATP and alpha-D-glucose 1-phosphate (G1P) to produce pyrophosphate and ADP-Glc. In Vibrio vulnificus (strain YJ016), this protein is Glucose-1-phosphate adenylyltransferase 1.